The following is a 172-amino-acid chain: Putative methyltransferase Mtx subunit A (172 aa).

It belongs to the MtrA family. May be part of a complex composed of 3 subunits; MtxA, MtxH and MtxX.

In Methanosarcina mazei (strain ATCC BAA-159 / DSM 3647 / Goe1 / Go1 / JCM 11833 / OCM 88) (Methanosarcina frisia), this protein is Putative methyltransferase Mtx subunit A (mtxA).